The chain runs to 122 residues: Large ribosomal subunit protein uL14 (122 aa).

This sequence belongs to the universal ribosomal protein uL14 family. In terms of assembly, part of the 50S ribosomal subunit. Forms a cluster with proteins L3 and L19. In the 70S ribosome, L14 and L19 interact and together make contacts with the 16S rRNA in bridges B5 and B8.

Binds to 23S rRNA. Forms part of two intersubunit bridges in the 70S ribosome. This chain is Large ribosomal subunit protein uL14, found in Bacillus pumilus (strain SAFR-032).